An 89-amino-acid polypeptide reads, in one-letter code: RNA-binding protein Hfq (89 aa).

The Sm domain occupies 14 to 73 (DPYLNALRKEKINVAIYLVNGVKLQGRVDSFDQFVVLLRSNVTQMVYKHAISTIVPARDP).

Belongs to the Hfq family. In terms of assembly, homohexamer.

RNA chaperone that binds small regulatory RNA (sRNAs) and mRNAs to facilitate mRNA translational regulation in response to envelope stress, environmental stress and changes in metabolite concentrations. Also binds with high specificity to tRNAs. This is RNA-binding protein Hfq from Hydrogenovibrio crunogenus (strain DSM 25203 / XCL-2) (Thiomicrospira crunogena).